Here is a 981-residue protein sequence, read N- to C-terminus: Isoleucine--tRNA ligase (981 aa).

The short motif at 50–60 (PTTNGMPHVGH) is the 'HIGH' region element. The short motif at 604-608 (KMSKS) is the 'KMSKS' region element. Position 607 (Lys-607) interacts with ATP.

The protein belongs to the class-I aminoacyl-tRNA synthetase family. IleS type 2 subfamily. In terms of assembly, monomer. It depends on Zn(2+) as a cofactor.

It is found in the cytoplasm. It carries out the reaction tRNA(Ile) + L-isoleucine + ATP = L-isoleucyl-tRNA(Ile) + AMP + diphosphate. Its function is as follows. Catalyzes the attachment of isoleucine to tRNA(Ile). As IleRS can inadvertently accommodate and process structurally similar amino acids such as valine, to avoid such errors it has two additional distinct tRNA(Ile)-dependent editing activities. One activity is designated as 'pretransfer' editing and involves the hydrolysis of activated Val-AMP. The other activity is designated 'posttransfer' editing and involves deacylation of mischarged Val-tRNA(Ile). This chain is Isoleucine--tRNA ligase, found in Pyrobaculum aerophilum (strain ATCC 51768 / DSM 7523 / JCM 9630 / CIP 104966 / NBRC 100827 / IM2).